Here is a 2195-residue protein sequence, read N- to C-terminus: Integrator complex subunit 1 (2195 aa).

The interval 1–86 is disordered; sequence MNRAKPTTVR…RPKLSSTPPL (86 aa). Ser-13 carries the post-translational modification Phosphoserine. The span at 34 to 45 shows a compositional bias: polar residues; that stretch reads GQASESKTTSTL. Lys-47 carries the post-translational modification N6-acetyllysine. Low complexity predominate over residues 62 to 75; sequence SASLSGTSALTGLT. Residue Thr-83 is modified to Phosphothreonine. Phosphoserine is present on Ser-87. The interval 267-297 is disordered; it reads LLQGEGARSGGELGAGSSPHPSLTEEEDSQT. Residues Ser-307 and Ser-926 each carry the phosphoserine modification. A disordered region spans residues 923 to 947; it reads STASGEEDDEGESREQKAKKRQRQQ. Residues 1165-1185 form a helical membrane-spanning segment; sequence HILVVHAMVILLTLGPPRSGD. The disordered stretch occupies residues 1313–1347; sequence SLPPRRDSTEAPKPESSPEPPPGQGRTRAGTQVPV. Positions 1316–1325 are enriched in basic and acidic residues; the sequence is PRRDSTEAPK. Phosphoserine occurs at positions 1320, 1328, and 1329.

This sequence belongs to the Integrator subunit 1 family. As to quaternary structure, component of the Integrator complex, composed of core subunits INTS1, INTS2, INTS3, INTS4, INTS5, INTS6, INTS7, INTS8, INTS9/RC74, INTS10, INTS11/CPSF3L, INTS12, INTS13, INTS14 and INTS15. The core complex associates with protein phosphatase 2A subunits PPP2CA and PPP2R1A, to form the Integrator-PP2A (INTAC) complex. Interacts with ESRRB, ESRRB is not a core component of the Integrator complex and this association is a bridge for the interaction with the multiprotein complex Integrator; attracts the transcriptional machinery.

It is found in the nucleus. The protein resides in the nucleus membrane. Its function is as follows. Component of the integrator complex, a multiprotein complex that terminates RNA polymerase II (Pol II) transcription in the promoter-proximal region of genes. The integrator complex provides a quality checkpoint during transcription elongation by driving premature transcription termination of transcripts that are unfavorably configured for transcriptional elongation: the complex terminates transcription by (1) catalyzing dephosphorylation of the C-terminal domain (CTD) of Pol II subunit POLR2A/RPB1 and SUPT5H/SPT5, (2) degrading the exiting nascent RNA transcript via endonuclease activity and (3) promoting the release of Pol II from bound DNA. The integrator complex is also involved in terminating the synthesis of non-coding Pol II transcripts, such as enhancer RNAs (eRNAs), small nuclear RNAs (snRNAs), telomerase RNAs and long non-coding RNAs (lncRNAs). Within the integrator complex, INTS1 is involved in the post-termination step: INTS1 displaces INTS3 and the SOSS factors, allowing the integrator complex to return to the closed conformation, ready to bind to the paused elongation complex for another termination cycle. Mediates recruitment of cytoplasmic dynein to the nuclear envelope, probably as component of the integrator complex. The chain is Integrator complex subunit 1 from Mus musculus (Mouse).